The sequence spans 151 residues: Prefoldin subunit alpha (151 aa).

Belongs to the prefoldin subunit alpha family. Heterohexamer of two alpha and four beta subunits.

The protein resides in the cytoplasm. Molecular chaperone capable of stabilizing a range of proteins. Seems to fulfill an ATP-independent, HSP70-like function in archaeal de novo protein folding. This Aeropyrum pernix (strain ATCC 700893 / DSM 11879 / JCM 9820 / NBRC 100138 / K1) protein is Prefoldin subunit alpha (pfdA).